Here is a 496-residue protein sequence, read N- to C-terminus: WD repeat-containing protein 37 (496 aa).

Composition is skewed to polar residues over residues 1-13 (MPTESGSCSTARQ) and 22-31 (SLSIRRTNSS). Residues 1–50 (MPTESGSCSTARQAKQKRKSHSLSIRRTNSSEQERTGLPREMLEGQDSKL) form a disordered region. The span at 32 to 47 (EQERTGLPREMLEGQD) shows a compositional bias: basic and acidic residues. WD repeat units lie at residues 154–194 (GHRD…CLVK) and 197–236 (GHVGSVNSIKFHPSEQLALTASGDQTAHIWRYVVQLPTPQ). The tract at residues 238 to 267 (VADTSQQISGEDEIECSDKDEPDIDGDVSS) is disordered. Residues 247–265 (GEDEIECSDKDEPDIDGDV) are compositionally biased toward acidic residues. WD repeat units lie at residues 281–320 (SHQGVVIAADWLVGGKQVVTASWDRTANLYDVETSELVHS), 323–362 (GHDQELTHCCTHPTQRLVVTSSRDTTFRLWDFRDPSIHSV), 367–405 (GHTDTVTSAVFTVGDNVVSGSDDRTVKVWDLKNMRSPIA), 408–447 (RTDSAINRINVCVGQKIIALPHDNRQVRLFDMSGVRLARL), and 454–495 (GHRR…LLQE).

Forms homodimers. Interacts with PACS1. Interacts with PACS2.

The protein localises to the cytoplasm. It localises to the nucleus. Required for normal ER Ca2+ handling in lymphocytes. Together with PACS1, it plays an essential role in stabilizing peripheral lymphocyte populations. This chain is WD repeat-containing protein 37 (Wdr37), found in Mus musculus (Mouse).